Reading from the N-terminus, the 241-residue chain is tRNA (guanine-N(7)-)-methyltransferase (241 aa).

A compositionally biased stretch (polar residues) spans 1–10 (MTESNDTPIQ). Residues 1 to 20 (MTESNDTPIQTEEGDERQHR) form a disordered region. S-adenosyl-L-methionine-binding residues include Glu-71, Glu-96, Asp-123, and Asp-146. Residue Asp-146 is part of the active site. Substrate is bound by residues Lys-150, Asp-182, and 219-222 (TKFE).

The protein belongs to the class I-like SAM-binding methyltransferase superfamily. TrmB family.

The enzyme catalyses guanosine(46) in tRNA + S-adenosyl-L-methionine = N(7)-methylguanosine(46) in tRNA + S-adenosyl-L-homocysteine. It participates in tRNA modification; N(7)-methylguanine-tRNA biosynthesis. Its function is as follows. Catalyzes the formation of N(7)-methylguanine at position 46 (m7G46) in tRNA. This chain is tRNA (guanine-N(7)-)-methyltransferase, found in Pseudomonas fluorescens (strain Pf0-1).